The sequence spans 289 residues: MSKAREIRTKIASIKNTQKITRAMELVAASKMRKAQDRMAMSRPYASKIRKVISHVAASHAEYPHPYLQQRENIKRVGYIIVTTDRGLCGGLNVNLFRTAIADMKKWQADNIGMDLCVIGRKGEAFFRRYGGNVLAVADHLGDAPEVQDIIGIVKVMLDQYDKQQIDAIYIATNEFVNTMVQKPLVRQLLPLKTDEEEVEGGYWDYIYEPDESKDLLEMLLVRYIESQVYQAVIENIACEQSARMVAMKNATENAGQLIDELRLIYNKARQAGITREIAEIVAGAAAVE.

This sequence belongs to the ATPase gamma chain family. In terms of assembly, F-type ATPases have 2 components, CF(1) - the catalytic core - and CF(0) - the membrane proton channel. CF(1) has five subunits: alpha(3), beta(3), gamma(1), delta(1), epsilon(1). CF(0) has three main subunits: a, b and c.

It is found in the cell inner membrane. Its function is as follows. Produces ATP from ADP in the presence of a proton gradient across the membrane. The gamma chain is believed to be important in regulating ATPase activity and the flow of protons through the CF(0) complex. This Coxiella burnetii (strain Dugway 5J108-111) protein is ATP synthase gamma chain.